The chain runs to 203 residues: Somatotropin (203 aa).

The N-terminal stretch at 1–17 (MDRVVLMLSVLSLGVSS) is a signal peptide. Position 18 is a pyrrolidone carboxylic acid (Gln18). His36 is a Zn(2+) binding site. Cys68 and Cys176 are joined by a disulfide. Glu185 serves as a coordination point for Zn(2+). A disulfide bridge links Cys193 with Cys201.

The protein belongs to the somatotropin/prolactin family.

The protein resides in the secreted. Functionally, growth hormone plays an important role in growth control and is involved in the regulation of several anabolic processes. Implicated as an osmoregulatory substance important for seawater adaptation. This chain is Somatotropin (gh), found in Pagrus major (Red sea bream).